We begin with the raw amino-acid sequence, 37 residues long: Mu-agatoxin-Aa1b (37 aa).

Intrachain disulfides connect C2/C18, C9/C23, C17/C33, and C25/C31. A Serine amide modification is found at S37.

This sequence belongs to the neurotoxin 07 (Beta/delta-agtx) family. 01 (aga-2) subfamily. In terms of tissue distribution, expressed by the venom gland.

The protein localises to the secreted. In terms of biological role, insecticidal neurotoxin that induces an irreversible spastic paralysis when injected into insects. Modifies presynaptic voltage-gated sodium channels (Nav), causing them to open at the normal resting potential of the nerve. This leads to spontaneous release of neurotransmitter and repetitive action potentials in motor neurons. This Agelenopsis aperta (North American funnel-web spider) protein is Mu-agatoxin-Aa1b.